We begin with the raw amino-acid sequence, 182 residues long: Protein LURP-one-related 7 (182 aa).

The protein belongs to the LOR family.

Might be related to the phospholipid scramblase and tubby-like superfamily of membrane tethered transcription factors. In Arabidopsis thaliana (Mouse-ear cress), this protein is Protein LURP-one-related 7.